The following is a 235-amino-acid chain: Ubiquinone biosynthesis O-methyltransferase (235 aa).

S-adenosyl-L-methionine-binding residues include arginine 39, glycine 59, aspartate 80, and methionine 124.

It belongs to the methyltransferase superfamily. UbiG/COQ3 family.

The catalysed reaction is a 3-demethylubiquinol + S-adenosyl-L-methionine = a ubiquinol + S-adenosyl-L-homocysteine + H(+). It carries out the reaction a 3-(all-trans-polyprenyl)benzene-1,2-diol + S-adenosyl-L-methionine = a 2-methoxy-6-(all-trans-polyprenyl)phenol + S-adenosyl-L-homocysteine + H(+). The protein operates within cofactor biosynthesis; ubiquinone biosynthesis. Functionally, O-methyltransferase that catalyzes the 2 O-methylation steps in the ubiquinone biosynthetic pathway. In Vibrio parahaemolyticus serotype O3:K6 (strain RIMD 2210633), this protein is Ubiquinone biosynthesis O-methyltransferase.